Here is a 536-residue protein sequence, read N- to C-terminus: 2-isopropylmalate synthase (536 aa).

Residues 8-269 form the Pyruvate carboxyltransferase domain; that stretch reads IIIFDTTLRD…YYNPFLGRPV (262 aa). 4 residues coordinate Mn(2+): Asp-17, His-208, His-210, and Asn-244. Positions 408-536 are regulatory domain; it reads RLELVQVSCG…KEKAAVTSAS (129 aa).

The protein belongs to the alpha-IPM synthase/homocitrate synthase family. LeuA type 1 subfamily. As to quaternary structure, homodimer. The cofactor is Mn(2+).

It is found in the cytoplasm. The enzyme catalyses 3-methyl-2-oxobutanoate + acetyl-CoA + H2O = (2S)-2-isopropylmalate + CoA + H(+). It participates in amino-acid biosynthesis; L-leucine biosynthesis; L-leucine from 3-methyl-2-oxobutanoate: step 1/4. In terms of biological role, catalyzes the condensation of the acetyl group of acetyl-CoA with 3-methyl-2-oxobutanoate (2-ketoisovalerate) to form 3-carboxy-3-hydroxy-4-methylpentanoate (2-isopropylmalate). The sequence is that of 2-isopropylmalate synthase from Gloeothece citriformis (strain PCC 7424) (Cyanothece sp. (strain PCC 7424)).